The chain runs to 242 residues: Large ribosomal subunit protein uL1 (242 aa).

This sequence belongs to the universal ribosomal protein uL1 family. In terms of assembly, part of the 50S ribosomal subunit.

Its function is as follows. Binds directly to 23S rRNA. The L1 stalk is quite mobile in the ribosome, and is involved in E site tRNA release. Protein L1 is also a translational repressor protein, it controls the translation of the L11 operon by binding to its mRNA. The chain is Large ribosomal subunit protein uL1 from Streptomyces sp. (strain FRI-5).